The following is a 354-amino-acid chain: Protein RecA (354 aa).

Residue 67-74 (GPESSGKT) participates in ATP binding.

The protein belongs to the RecA family.

The protein localises to the cytoplasm. Functionally, can catalyze the hydrolysis of ATP in the presence of single-stranded DNA, the ATP-dependent uptake of single-stranded DNA by duplex DNA, and the ATP-dependent hybridization of homologous single-stranded DNAs. It interacts with LexA causing its activation and leading to its autocatalytic cleavage. The protein is Protein RecA of Enterobacter agglomerans (Erwinia herbicola).